Here is a 94-residue protein sequence, read N- to C-terminus: Putative regulatory protein Sfum_3631 (94 aa).

It belongs to the RemA family.

The protein is Putative regulatory protein Sfum_3631 of Syntrophobacter fumaroxidans (strain DSM 10017 / MPOB).